Here is a 351-residue protein sequence, read N- to C-terminus: UDP-3-O-acylglucosamine N-acyltransferase (351 aa).

His-257 serves as the catalytic Proton acceptor.

It belongs to the transferase hexapeptide repeat family. LpxD subfamily. Homotrimer.

It carries out the reaction a UDP-3-O-[(3R)-3-hydroxyacyl]-alpha-D-glucosamine + a (3R)-hydroxyacyl-[ACP] = a UDP-2-N,3-O-bis[(3R)-3-hydroxyacyl]-alpha-D-glucosamine + holo-[ACP] + H(+). Its pathway is bacterial outer membrane biogenesis; LPS lipid A biosynthesis. Functionally, catalyzes the N-acylation of UDP-3-O-acylglucosamine using 3-hydroxyacyl-ACP as the acyl donor. Is involved in the biosynthesis of lipid A, a phosphorylated glycolipid that anchors the lipopolysaccharide to the outer membrane of the cell. The sequence is that of UDP-3-O-acylglucosamine N-acyltransferase from Methylorubrum populi (strain ATCC BAA-705 / NCIMB 13946 / BJ001) (Methylobacterium populi).